The sequence spans 90 residues: MALNLEKKQEIIKAFATKENDTGSCEVQVALLNERIKLLTEHLKANPKDHSSRLGLLELVAQRRNLLKYIKRTDHARYVVLIEKLGIKDR.

This sequence belongs to the universal ribosomal protein uS15 family. Part of the 30S ribosomal subunit. Forms a bridge to the 50S subunit in the 70S ribosome, contacting the 23S rRNA.

One of the primary rRNA binding proteins, it binds directly to 16S rRNA where it helps nucleate assembly of the platform of the 30S subunit by binding and bridging several RNA helices of the 16S rRNA. Functionally, forms an intersubunit bridge (bridge B4) with the 23S rRNA of the 50S subunit in the ribosome. This chain is Small ribosomal subunit protein uS15, found in Helicobacter acinonychis (strain Sheeba).